A 685-amino-acid chain; its full sequence is Sodium-dependent phosphate transporter 1 (685 aa).

6 helical membrane-spanning segments follow: residues 25–45 (FLWM…SVGA), 66–86 (ACIL…AKVS), 106–126 (LMAG…AASF), 162–182 (IVLS…LLFY), 201–221 (ALPI…MYSG), and 234–254 (GIIL…WFFV). A compositionally biased stretch (acidic residues) spans 482–492 (VEAEEQEEGSI). The segment at 482–513 (VEAEEQEEGSIEDVATDRKSSSSSLEERHDQD) is disordered. Positions 496-513 (ATDRKSSSSSLEERHDQD) are enriched in basic and acidic residues. The next 4 membrane-spanning stretches (helical) occupy residues 517-537 (VSLL…FAHG), 565-585 (ATPI…LWVW), 606-626 (FSIE…GLPI), and 656-676 (IFLA…AIMA).

This sequence belongs to the inorganic phosphate transporter (PiT) (TC 2.A.20) family.

The protein resides in the cell membrane. It catalyses the reaction 2 Na(+)(out) + phosphate(out) = 2 Na(+)(in) + phosphate(in). Its function is as follows. Sodium-phosphate symporter which preferentially transports the monovalent form of phosphate with a stoichiometry of two sodium ions per phosphate ion. The protein is Sodium-dependent phosphate transporter 1 (slc20a1) of Xenopus tropicalis (Western clawed frog).